Reading from the N-terminus, the 190-residue chain is MIDPDGYRPNVGIVLMRRDGQVFWGRRVRRDGWQFPQGGMHSDETPVEAMYRELNEEIGLLPEHVQLVGATPGWLRYRLPSQAVRCNRSQMCIGQKQVWFLLQLIGDESHVQLDQSENPEFDHWRWVSFWYPIEHVVMFKRGVYARALCQLASLAQQVVGLEVGTMPQYVQDICLLNVGYKHLPNWVSRY.

Residues Gly-6 to Cys-149 enclose the Nudix hydrolase domain. The short motif at Gly-38 to Gly-59 is the Nudix box element.

This sequence belongs to the Nudix hydrolase family. RppH subfamily. Requires a divalent metal cation as cofactor.

In terms of biological role, accelerates the degradation of transcripts by removing pyrophosphate from the 5'-end of triphosphorylated RNA, leading to a more labile monophosphorylated state that can stimulate subsequent ribonuclease cleavage. The sequence is that of RNA pyrophosphohydrolase from Xylella fastidiosa (strain M12).